Consider the following 321-residue polypeptide: Lipoyl synthase (321 aa).

Cys68, Cys73, Cys79, Cys94, Cys98, Cys101, and Ser308 together coordinate [4Fe-4S] cluster. A Radical SAM core domain is found at 80-297; it reads FNHGTATFMI…KAEAMAMGFT (218 aa).

This sequence belongs to the radical SAM superfamily. Lipoyl synthase family. It depends on [4Fe-4S] cluster as a cofactor.

It localises to the cytoplasm. It catalyses the reaction [[Fe-S] cluster scaffold protein carrying a second [4Fe-4S](2+) cluster] + N(6)-octanoyl-L-lysyl-[protein] + 2 oxidized [2Fe-2S]-[ferredoxin] + 2 S-adenosyl-L-methionine + 4 H(+) = [[Fe-S] cluster scaffold protein] + N(6)-[(R)-dihydrolipoyl]-L-lysyl-[protein] + 4 Fe(3+) + 2 hydrogen sulfide + 2 5'-deoxyadenosine + 2 L-methionine + 2 reduced [2Fe-2S]-[ferredoxin]. Its pathway is protein modification; protein lipoylation via endogenous pathway; protein N(6)-(lipoyl)lysine from octanoyl-[acyl-carrier-protein]: step 2/2. In terms of biological role, catalyzes the radical-mediated insertion of two sulfur atoms into the C-6 and C-8 positions of the octanoyl moiety bound to the lipoyl domains of lipoate-dependent enzymes, thereby converting the octanoylated domains into lipoylated derivatives. The protein is Lipoyl synthase of Yersinia pseudotuberculosis serotype O:1b (strain IP 31758).